The chain runs to 21 residues: thr operon leader peptide (21 aa).

The protein belongs to the thr operon leader peptide family.

Its function is as follows. This protein is involved in control of the biosynthesis of threonine. This is thr operon leader peptide from Salmonella choleraesuis (strain SC-B67).